Here is a 315-residue protein sequence, read N- to C-terminus: MDLRQFLMCLSLCTAFALSKPTEKKDRVHHEPQLSDKVHNDAQSFDYDHDAFLGAEEAKTFDQLTPEESKERLGKIVSKIDDDKDGFVTVDELKDWIKFAQKRWIYEDVERQWKGHDLNEDGLVSWEEYKNATYGYVLDDPDPDDGFNYKQMMVRDERRFKMADKDGDLIATKEEFTAFLHPEEYDYMKDIVVQETMEDIDKNADGFIDLEEYIGDMYSHDGNTDEPEWVKTEREQFVEFRDKNRDGKMDKEETKDWILPSDYDHAEAEARHLVYESDQNKDGKLTKEEIVDKYDLFVGSQATDFGEALVRHDEF.

A signal peptide spans 1 to 19 (MDLRQFLMCLSLCTAFALS). Serine 44 is subject to Phosphoserine. Tyrosine 47 bears the Phosphotyrosine mark. Threonine 65 is subject to Phosphothreonine. EF-hand domains lie at 68 to 103 (ESKERLGKIVSKIDDDKDGFVTVDELKDWIKFAQKR), 104 to 139 (WIYEDVERQWKGHDLNEDGLVSWEEYKNATYGYVLD), 151 to 186 (QMMVRDERRFKMADKDGDLIATKEEFTAFLHPEEYD), 188 to 223 (MKDIVVQETMEDIDKNADGFIDLEEYIGDMYSHDGN), 229 to 264 (WVKTEREQFVEFRDKNRDGKMDKEETKDWILPSDYD), and 265 to 300 (HAEAEARHLVYESDQNKDGKLTKEEIVDKYDLFVGS). Serine 69 carries the post-translational modification Phosphoserine. Aspartate 81, aspartate 83, aspartate 85, glutamate 92, aspartate 117, asparagine 119, aspartate 121, and glutamate 128 together coordinate Ca(2+). Residue asparagine 131 is glycosylated (N-linked (GlcNAc...) asparagine). A Ca(2+)-binding site is contributed by aspartate 164. Lysine 165 bears the N6-acetyllysine mark. Aspartate 166, aspartate 168, glutamate 175, aspartate 201, asparagine 203, aspartate 205, glutamate 212, aspartate 242, asparagine 244, aspartate 246, lysine 248, and glutamate 253 together coordinate Ca(2+). Position 254 is a phosphothreonine (threonine 254). Serine 261 and serine 277 each carry phosphoserine. Aspartate 278, asparagine 280, aspartate 282, lysine 284, and glutamate 289 together coordinate Ca(2+). The Prevents secretion from ER signature appears at 312–315 (HDEF).

This sequence belongs to the CREC family. As to quaternary structure, interacts with GGCX.

The protein resides in the endoplasmic reticulum membrane. It localises to the golgi apparatus. The protein localises to the secreted. It is found in the melanosome. Its subcellular location is the sarcoplasmic reticulum lumen. In terms of biological role, involved in regulation of vitamin K-dependent carboxylation of multiple N-terminal glutamate residues. Seems to inhibit gamma-carboxylase GGCX. Binds 7 calcium ions with a low affinity. This is Calumenin (CALU) from Pongo abelii (Sumatran orangutan).